Here is a 63-residue protein sequence, read N- to C-terminus: Conotoxin Pu5.4 (63 aa).

An N-terminal signal peptide occupies residues 1-22 (MRCVPVFVILLLLIASTPSVDA). Positions 23–50 (TQKTKDDMSLASFHDNAKRFLQTLRNTR) are excised as a propeptide. Trp62 carries the post-translational modification Tryptophan amide.

This sequence belongs to the conotoxin T superfamily. Post-translationally, contains 2 disulfide bonds that can be either 'C1-C3, C2-C4' or 'C1-C4, C2-C3', since these disulfide connectivities have been observed for conotoxins with cysteine framework V (for examples, see AC P0DQQ7 and AC P81755). Expressed by the venom duct.

Its subcellular location is the secreted. In Conus pulicarius (Flea-bitten cone), this protein is Conotoxin Pu5.4.